A 458-amino-acid polypeptide reads, in one-letter code: Adenylosuccinate synthetase (458 aa).

Residues 17–23 (GDEGKGK) and 45–47 (GHT) each bind GTP. Residue Asp18 is the Proton acceptor of the active site. The Mg(2+) site is built by Asp18 and Gly45. Residues 18 to 21 (DEGK), 43 to 46 (NAGH), Thr137, Arg151, Gln247, Thr262, and Arg330 contribute to the IMP site. His46 serves as the catalytic Proton donor. 326–332 (VTTGRSR) lines the substrate pocket. GTP-binding positions include Arg332, 358 to 360 (KLD), and 440 to 442 (STS).

The protein belongs to the adenylosuccinate synthetase family. In terms of assembly, homodimer. The cofactor is Mg(2+).

It localises to the cytoplasm. The catalysed reaction is IMP + L-aspartate + GTP = N(6)-(1,2-dicarboxyethyl)-AMP + GDP + phosphate + 2 H(+). It functions in the pathway purine metabolism; AMP biosynthesis via de novo pathway; AMP from IMP: step 1/2. Its function is as follows. Plays an important role in the de novo pathway of purine nucleotide biosynthesis. Catalyzes the first committed step in the biosynthesis of AMP from IMP. This Delftia acidovorans (strain DSM 14801 / SPH-1) protein is Adenylosuccinate synthetase.